The following is a 68-amino-acid chain: Large ribosomal subunit protein eL24 (68 aa).

4 residues coordinate Zn(2+): Cys-7, Cys-10, Cys-33, and Cys-37. The C4-type zinc finger occupies 7–37 (CDFCGRIIEPGTGKMFVKNDGTILWFCSSKC).

It belongs to the eukaryotic ribosomal protein eL24 family. In terms of assembly, part of the 50S ribosomal subunit. Forms a cluster with proteins L3 and L14. It depends on Zn(2+) as a cofactor.

Its function is as follows. Binds to the 23S rRNA. This chain is Large ribosomal subunit protein eL24, found in Methanopyrus kandleri (strain AV19 / DSM 6324 / JCM 9639 / NBRC 100938).